Reading from the N-terminus, the 103-residue chain is Large ribosomal subunit protein uL23 (103 aa).

It belongs to the universal ribosomal protein uL23 family. In terms of assembly, part of the 50S ribosomal subunit. Contacts protein L29, and trigger factor when it is bound to the ribosome.

One of the early assembly proteins it binds 23S rRNA. One of the proteins that surrounds the polypeptide exit tunnel on the outside of the ribosome. Forms the main docking site for trigger factor binding to the ribosome. The chain is Large ribosomal subunit protein uL23 from Chlorobium phaeovibrioides (strain DSM 265 / 1930) (Prosthecochloris vibrioformis (strain DSM 265)).